Reading from the N-terminus, the 200-residue chain is Mpv17-like protein 2 (200 aa).

Transmembrane regions (helical) follow at residues 24 to 40, 63 to 83, and 102 to 122; these read ALLL…MAAG, ASMF…YLWL, and VLVD…LGLG.

This sequence belongs to the peroxisomal membrane protein PXMP2/4 family. Interacts with the large mitochondrial ribosomal subunit.

The protein localises to the membrane. It is found in the mitochondrion inner membrane. Functionally, required for the assembly and stability of the mitochondrial ribosome. Is a positive regulator of mitochondrial protein synthesis. The sequence is that of Mpv17-like protein 2 (Mpv17l2) from Mus musculus (Mouse).